The following is a 296-amino-acid chain: Syntenin-2 (296 aa).

2 consecutive PDZ domains span residues 112–191 (EIHL…VRDR) and 196–271 (TVTM…IPTV).

As to quaternary structure, monomer and homodimer. Interacts with SDCBP. Interacts with TM4SF1.

It localises to the cytoplasm. The protein resides in the nucleus. The protein localises to the nucleolus. Its subcellular location is the nucleoplasm. It is found in the cell membrane. It localises to the nucleus speckle. Binds phosphatidylinositol 4,5-bisphosphate (PIP2). May play a role in the organization of nuclear PIP2, cell division and cell survival. This is Syntenin-2 (Sdcbp2) from Rattus norvegicus (Rat).